A 125-amino-acid polypeptide reads, in one-letter code: Small ribosomal subunit protein eS25 (125 aa).

Residues 1 to 23 (MPPKDDKKKKDAGKSAKKDKDPV) show a composition bias toward basic and acidic residues. Residues 1–38 (MPPKDDKKKKDAGKSAKKDKDPVNKSGGKAKKKKWSKG) are disordered. Over residues 28–38 (GKAKKKKWSKG) the composition is skewed to basic residues. At lysine 43 the chain carries N6-acetyllysine. Residue lysine 52 is modified to N6-acetyllysine; alternate. An N6-succinyllysine; alternate modification is found at lysine 52. N6-acetyllysine is present on residues lysine 60 and lysine 66. Lysine 94 is modified (N6-acetyllysine; alternate). Lysine 94 carries the post-translational modification N6-succinyllysine; alternate.

It belongs to the eukaryotic ribosomal protein eS25 family. Component of the small ribosomal subunit.

It localises to the cytoplasm. In terms of biological role, component of the small ribosomal subunit. The ribosome is a large ribonucleoprotein complex responsible for the synthesis of proteins in the cell. The protein is Small ribosomal subunit protein eS25 (RPS25) of Homo sapiens (Human).